A 145-amino-acid chain; its full sequence is Large ribosomal subunit protein uL11 (145 aa).

This sequence belongs to the universal ribosomal protein uL11 family. As to quaternary structure, part of the ribosomal stalk of the 50S ribosomal subunit. Interacts with L10 and the large rRNA to form the base of the stalk. L10 forms an elongated spine to which L12 dimers bind in a sequential fashion forming a multimeric L10(L12)X complex. Post-translationally, one or more lysine residues are methylated.

Functionally, forms part of the ribosomal stalk which helps the ribosome interact with GTP-bound translation factors. This is Large ribosomal subunit protein uL11 from Rickettsia typhi (strain ATCC VR-144 / Wilmington).